A 163-amino-acid polypeptide reads, in one-letter code: MAAAVVLAAGLCVARRAVAVAGPRGVQVRGAAGVTDGDEVAKAQQAAPGGAAPTIFSRILDRSLPADILYEDQQCLAFRDVAPQAPVHFLVIPKKPIPRISQAEEEDQQLLGHLLLVAKETAKAEGLGDGYRLVINDGKLGAQSVYHLHIHVLGGRQLQWPPG.

Residues 1–17 (MAAAVVLAAGLCVARRA) constitute a mitochondrion transit peptide. Residues 55–163 (IFSRILDRSL…GGRQLQWPPG (109 aa)) form the HIT domain. Positions 63 and 80 each coordinate AMP. Lys-119 carries the N6-acetyllysine modification. Asn-136 contributes to the AMP binding site. Position 139 is an N6-acetyllysine (Lys-139). AMP-binding positions include 142-145 (AQSV) and 149-151 (HIH). The short motif at 147–151 (HLHIH) is the Histidine triad motif element. The active-site Tele-AMP-histidine intermediate is His-149.

It belongs to the HINT family.

The protein resides in the mitochondrion. It carries out the reaction adenosine 5'-phosphoramidate + H2O = AMP + NH4(+). In terms of biological role, exhibits adenosine 5'-monophosphoramidase activity, hydrolyzing purine nucleotide phosphoramidates with a single phosphate group such as adenosine 5'monophosphoramidate (AMP-NH2) to yield AMP and NH2. Hydrolyzes adenosine 5'-O-p-nitrophenylphosphoramidate (AMP-pNA). May be involved in steroid biosynthesis. May play a role in apoptosis. In Bos taurus (Bovine), this protein is Adenosine 5'-monophosphoramidase HINT2.